Consider the following 321-residue polypeptide: Glyoxylate/hydroxypyruvate reductase B (321 aa).

Catalysis depends on residues Arg-237 and Glu-266. His-285 (proton donor) is an active-site residue.

Belongs to the D-isomer specific 2-hydroxyacid dehydrogenase family. GhrB subfamily. In terms of assembly, homodimer.

The protein resides in the cytoplasm. It carries out the reaction glycolate + NADP(+) = glyoxylate + NADPH + H(+). It catalyses the reaction (R)-glycerate + NAD(+) = 3-hydroxypyruvate + NADH + H(+). The enzyme catalyses (R)-glycerate + NADP(+) = 3-hydroxypyruvate + NADPH + H(+). Its function is as follows. Catalyzes the NADPH-dependent reduction of glyoxylate and hydroxypyruvate into glycolate and glycerate, respectively. The chain is Glyoxylate/hydroxypyruvate reductase B from Erwinia tasmaniensis (strain DSM 17950 / CFBP 7177 / CIP 109463 / NCPPB 4357 / Et1/99).